The following is a 184-amino-acid chain: MTSITGMIDPFLLLATESHAEGEALIGFHFDFLESNILNLAILVGVLVFYGRKVVGNILSERRNQIAQAIQEAEEKQRTAAQALAKEKENLAQAQKEAARIHEAAIERAKTLRAEIAAQSERDIARLKETAAADLSSEQERVMAQLKKQIAEQAIVKAESQLKAQVDNNTQQRLIDRSIARLGG.

A helical transmembrane segment spans residues 36 to 55 (NILNLAILVGVLVFYGRKVV).

The protein belongs to the ATPase B chain family. F-type ATPases have 2 components, F(1) - the catalytic core - and F(0) - the membrane proton channel. F(1) has five subunits: alpha(3), beta(3), gamma(1), delta(1), epsilon(1). F(0) has four main subunits: a(1), b(1), b'(1) and c(10-14). The alpha and beta chains form an alternating ring which encloses part of the gamma chain. F(1) is attached to F(0) by a central stalk formed by the gamma and epsilon chains, while a peripheral stalk is formed by the delta, b and b' chains.

It is found in the cellular thylakoid membrane. In terms of biological role, f(1)F(0) ATP synthase produces ATP from ADP in the presence of a proton or sodium gradient. F-type ATPases consist of two structural domains, F(1) containing the extramembraneous catalytic core and F(0) containing the membrane proton channel, linked together by a central stalk and a peripheral stalk. During catalysis, ATP synthesis in the catalytic domain of F(1) is coupled via a rotary mechanism of the central stalk subunits to proton translocation. Component of the F(0) channel, it forms part of the peripheral stalk, linking F(1) to F(0). This chain is ATP synthase subunit b 1, found in Crocosphaera subtropica (strain ATCC 51142 / BH68) (Cyanothece sp. (strain ATCC 51142)).